Consider the following 252-residue polypeptide: Imidazole glycerol phosphate synthase subunit HisF (252 aa).

Active-site residues include Asp-11 and Asp-130.

The protein belongs to the HisA/HisF family. Heterodimer of HisH and HisF.

The protein localises to the cytoplasm. It catalyses the reaction 5-[(5-phospho-1-deoxy-D-ribulos-1-ylimino)methylamino]-1-(5-phospho-beta-D-ribosyl)imidazole-4-carboxamide + L-glutamine = D-erythro-1-(imidazol-4-yl)glycerol 3-phosphate + 5-amino-1-(5-phospho-beta-D-ribosyl)imidazole-4-carboxamide + L-glutamate + H(+). The protein operates within amino-acid biosynthesis; L-histidine biosynthesis; L-histidine from 5-phospho-alpha-D-ribose 1-diphosphate: step 5/9. Functionally, IGPS catalyzes the conversion of PRFAR and glutamine to IGP, AICAR and glutamate. The HisF subunit catalyzes the cyclization activity that produces IGP and AICAR from PRFAR using the ammonia provided by the HisH subunit. This Rhodospirillum rubrum (strain ATCC 11170 / ATH 1.1.1 / DSM 467 / LMG 4362 / NCIMB 8255 / S1) protein is Imidazole glycerol phosphate synthase subunit HisF.